The following is a 49-amino-acid chain: Large ribosomal subunit protein bL33A (49 aa).

It belongs to the bacterial ribosomal protein bL33 family.

This Enterococcus faecalis (strain ATCC 700802 / V583) protein is Large ribosomal subunit protein bL33A (rpmG1).